A 234-amino-acid polypeptide reads, in one-letter code: Heme-copper oxidase subunit 2 (234 aa).

The next 2 membrane-spanning stretches (helical) occupy residues 13–33 and 72–92; these read LFLL…AFFI and LLFV…DETL. The Cu cation site is built by His-151, Cys-188, Cys-192, and His-196.

This sequence belongs to the cytochrome c oxidase subunit 2 family.

Its subcellular location is the cell membrane. This is Heme-copper oxidase subunit 2 (aoxA) from Aeropyrum pernix (strain ATCC 700893 / DSM 11879 / JCM 9820 / NBRC 100138 / K1).